Here is a 399-residue protein sequence, read N- to C-terminus: Enoyl-[acyl-carrier-protein] reductase [NADH] 2 (399 aa).

NAD(+) contacts are provided by residues 48-53 (GASSGF), 75-76 (FE), 112-113 (DA), and 141-142 (LA). Tyr-227 contributes to the substrate binding site. Tyr-237 (proton donor) is an active-site residue. NAD(+) is bound by residues Lys-246 and 275-277 (LVT).

This sequence belongs to the TER reductase family. As to quaternary structure, monomer.

It catalyses the reaction a 2,3-saturated acyl-[ACP] + NAD(+) = a (2E)-enoyl-[ACP] + NADH + H(+). Its pathway is lipid metabolism; fatty acid biosynthesis. Functionally, involved in the final reduction of the elongation cycle of fatty acid synthesis (FAS II). Catalyzes the reduction of a carbon-carbon double bond in an enoyl moiety that is covalently linked to an acyl carrier protein (ACP). The chain is Enoyl-[acyl-carrier-protein] reductase [NADH] 2 from Vibrio parahaemolyticus serotype O3:K6 (strain RIMD 2210633).